The primary structure comprises 342 residues: MSDEDDLEDFETDQDDLEREDDEKETEEWEDYRKEGEESEDWISTPLTEDMMKEGLSLLCKTGNGLAHAYVKLEIKDRDLTDIHLLRSYIHLRYVDVSENHLTDLSPLNHLTNLLWLKADGNQLRSARLNELPYLQIASFAYNQITDTEGISHPRLASLDLKGNRIHMVTGLDPQKLISLHTLELRGNQLNSTLGINLPKLKNLFLAQNMLKKVEGLENLSNLTTLHLRDNQIETLSGFSKEMKSLQYLNLRGNMVADLGELAKLRDLPRLRALVLLDNPCTDENDYRQEALVQIAHLERLDKEFYEEEERAEADEIRQRMKEEQEQEAEVEPESELDQSST.

Positions 1–30 (MSDEDDLEDFETDQDDLEREDDEKETEEWE) are enriched in acidic residues. The disordered stretch occupies residues 1-42 (MSDEDDLEDFETDQDDLEREDDEKETEEWEDYRKEGEESEDW). Positions 3–27 (DEDDLEDFETDQDDLEREDDEKETE) form a coiled coil. LRR repeat units lie at residues 91-112 (HLRY…NHLT), 113-133 (NLLW…NELP), 134-154 (YLQI…ISHP), 155-176 (RLAS…DPQK), 179-199 (SLHT…INLP), 200-221 (KLKN…ENLS), 222-243 (NLTT…SKEM), and 245-266 (SLQY…AKLR). Residues 207–342 (AQNMLKKVEG…PESELDQSST (136 aa)) form an interaction with RSPH9 region. The 39-residue stretch at 279–317 (NPCTDENDYRQEALVQIAHLERLDKEFYEEEERAEADEI) folds into the LRRCT domain. Positions 306–332 (YEEEERAEADEIRQRMKEEQEQEAEVE) form a coiled coil. A disordered region spans residues 307-342 (EEEERAEADEIRQRMKEEQEQEAEVEPESELDQSST). The segment covering 314-324 (ADEIRQRMKEE) has biased composition (basic and acidic residues). Over residues 325 to 342 (QEQEAEVEPESELDQSST) the composition is skewed to acidic residues.

In terms of assembly, component of the axonemal radial spoke complex. Interacts with RSPH3. Interacts with RSPH9.

The protein resides in the cytoplasm. Its subcellular location is the cytoskeleton. The protein localises to the flagellum axoneme. In terms of biological role, essential for sperm motility and male fertility. Plays an important role in the proper assembly of the third radial spoke (RS3) head and the bridge structure between RS2 and RS3 in the sperm flagella. This is Leucine-rich repeat-containing protein 23 (LRRC23) from Bos taurus (Bovine).